A 262-amino-acid polypeptide reads, in one-letter code: 5'-nucleotidase SurE (262 aa).

Residues D9, D10, S40, and N95 each contribute to the a divalent metal cation site.

The protein belongs to the SurE nucleotidase family. A divalent metal cation serves as cofactor.

It is found in the cytoplasm. It carries out the reaction a ribonucleoside 5'-phosphate + H2O = a ribonucleoside + phosphate. Its function is as follows. Nucleotidase that shows phosphatase activity on nucleoside 5'-monophosphates. The protein is 5'-nucleotidase SurE of Aliarcobacter butzleri (strain RM4018) (Arcobacter butzleri).